Consider the following 402-residue polypeptide: Protein PMR5 (402 aa).

Residues L7–Q23 traverse the membrane as a helical; Signal-anchor for type II membrane protein segment. The interval G40–Q60 is disordered. Residues S41 to S56 show a composition bias toward low complexity. Residues G140 to S142 carry the GDS motif motif. A DCXHWCLPGXXDXWN motif motif is present at residues D379 to N393.

It belongs to the PC-esterase family. TBL subfamily. As to expression, expressed in flowers, siliques, stems and leaves.

It localises to the membrane. Its function is as follows. Required for nonhost resistance (NHR) during plant-microbe interactions. Plants mutated in PMR5 are resistant to powdery mildew species. May act as a bridging protein that binds pectin and other cell wall polysaccharides. Probably involved in maintaining esterification of pectins. May be involved in the specific O-acetylation of cell wall polymers. The protein is Protein PMR5 (PMR5) of Arabidopsis thaliana (Mouse-ear cress).